A 229-amino-acid chain; its full sequence is 2,3-bisphosphoglycerate-dependent phosphoglycerate mutase 2 (229 aa).

Residues 12–19 (RHGESVAN), 25–26 (TG), Arg-65, 92–95 (ERHY), Lys-103, and 119–120 (RR) each bind substrate. His-13 (tele-phosphohistidine intermediate) is an active-site residue. Glu-92 serves as the catalytic Proton donor/acceptor.

This sequence belongs to the phosphoglycerate mutase family. BPG-dependent PGAM subfamily.

The enzyme catalyses (2R)-2-phosphoglycerate = (2R)-3-phosphoglycerate. It functions in the pathway carbohydrate degradation; glycolysis; pyruvate from D-glyceraldehyde 3-phosphate: step 3/5. Catalyzes the interconversion of 2-phosphoglycerate and 3-phosphoglycerate. The protein is 2,3-bisphosphoglycerate-dependent phosphoglycerate mutase 2 of Lactobacillus johnsonii (strain CNCM I-12250 / La1 / NCC 533).